Reading from the N-terminus, the 944-residue chain is DNA ligase 4 (944 aa).

The ATP site is built by Glu-280, Lys-282, Arg-287, Glu-340, Phe-382, Glu-442, Lys-447, Lys-464, and Lys-466. Lys-282 serves as the catalytic N6-AMP-lysine intermediate. Glu-340 contributes to the Mg(2+) binding site. Glu-442 contributes to the Mg(2+) binding site. BRCT domains are found at residues 681 to 780 (PISN…PNYC) and 836 to 941 (FPLF…DFPV).

It belongs to the ATP-dependent DNA ligase family. Component of the DNA ligase IV complex, composed of DNL4, LIF1 and NEJ1. Interacts (via BRCT domain) with LIF1. Interacts with NEJ1. Interacts with POL4 in the DNL4-LIF1 complex. The cofactor is Mg(2+).

It localises to the nucleus. The enzyme catalyses ATP + (deoxyribonucleotide)n-3'-hydroxyl + 5'-phospho-(deoxyribonucleotide)m = (deoxyribonucleotide)n+m + AMP + diphosphate.. Its function is as follows. DNA ligase involved in DNA non-homologous end joining (NHEJ); required for double-strand break (DSB) repair. The polypeptide is DNA ligase 4 (DNL4) (Saccharomyces cerevisiae (strain ATCC 204508 / S288c) (Baker's yeast)).